Here is a 132-residue protein sequence, read N- to C-terminus: Large ribosomal subunit protein uL14 (132 aa).

Belongs to the universal ribosomal protein uL14 family. Part of the 50S ribosomal subunit. Forms a cluster with proteins L3 and L24e, part of which may contact the 16S rRNA in 2 intersubunit bridges.

Binds to 23S rRNA. Forms part of two intersubunit bridges in the 70S ribosome. The chain is Large ribosomal subunit protein uL14 from Methanosarcina barkeri (strain Fusaro / DSM 804).